A 155-amino-acid polypeptide reads, in one-letter code: Transcription antitermination protein NusB (155 aa).

Belongs to the NusB family.

In terms of biological role, involved in transcription antitermination. Required for transcription of ribosomal RNA (rRNA) genes. Binds specifically to the boxA antiterminator sequence of the ribosomal RNA (rrn) operons. The protein is Transcription antitermination protein NusB of Ralstonia pickettii (strain 12J).